A 344-amino-acid chain; its full sequence is Protein pelota homolog (344 aa).

It belongs to the eukaryotic release factor 1 family. Pelota subfamily. In terms of assembly, monomer. It depends on a divalent metal cation as a cofactor.

It localises to the cytoplasm. Functionally, may function in recognizing stalled ribosomes, interact with stem-loop structures in stalled mRNA molecules, and effect endonucleolytic cleavage of the mRNA. May play a role in the release non-functional ribosomes and degradation of damaged mRNAs. Has endoribonuclease activity. This chain is Protein pelota homolog, found in Archaeoglobus fulgidus (strain ATCC 49558 / DSM 4304 / JCM 9628 / NBRC 100126 / VC-16).